Reading from the N-terminus, the 421-residue chain is Gamma-glutamyl phosphate reductase (421 aa).

This sequence belongs to the gamma-glutamyl phosphate reductase family.

It is found in the cytoplasm. The enzyme catalyses L-glutamate 5-semialdehyde + phosphate + NADP(+) = L-glutamyl 5-phosphate + NADPH + H(+). The protein operates within amino-acid biosynthesis; L-proline biosynthesis; L-glutamate 5-semialdehyde from L-glutamate: step 2/2. Functionally, catalyzes the NADPH-dependent reduction of L-glutamate 5-phosphate into L-glutamate 5-semialdehyde and phosphate. The product spontaneously undergoes cyclization to form 1-pyrroline-5-carboxylate. This chain is Gamma-glutamyl phosphate reductase, found in Ruegeria sp. (strain TM1040) (Silicibacter sp.).